Reading from the N-terminus, the 1062-residue chain is Carbamoyl phosphate synthase large chain (1062 aa).

The interval 1–401 (MPKRTDIHKI…AMQKAVQSLE (401 aa)) is carboxyphosphate synthetic domain. Residues Arg129, Arg169, Gly175, Gly176, Lys208, Ile210, Glu215, Gly241, Ile242, His243, Gln284, and Glu298 each coordinate ATP. The 195-residue stretch at 133–327 (KELCQKLGEP…IAKMAAKIAI (195 aa)) folds into the ATP-grasp 1 domain. Gln284, Glu298, and Asn300 together coordinate Mg(2+). Residues Gln284, Glu298, and Asn300 each contribute to the Mn(2+) site. An oligomerization domain region spans residues 402–546 (IDEKDLYSAK…YSTYDGENES (145 aa)). Residues 547-929 (RKSGKKSVIV…ALYKAFAGAK (383 aa)) form a carbamoyl phosphate synthetic domain region. An ATP-grasp 2 domain is found at 671–861 (DQIIKSLHLH…MAQVATRVIM (191 aa)). ATP-binding residues include Arg707, Asp746, Leu748, Glu752, Gly777, Val778, His779, Ser780, Gln820, and Glu832. Positions 820, 832, and 834 each coordinate Mg(2+). The Mn(2+) site is built by Gln820, Glu832, and Asn834. The MGS-like domain maps to 930 to 1062 (MQLPENGNVL…NRSFATDALK (133 aa)). Positions 930–1062 (MQLPENGNVL…NRSFATDALK (133 aa)) are allosteric domain.

It belongs to the CarB family. In terms of assembly, composed of two chains; the small (or glutamine) chain promotes the hydrolysis of glutamine to ammonia, which is used by the large (or ammonia) chain to synthesize carbamoyl phosphate. Tetramer of heterodimers (alpha,beta)4. It depends on Mg(2+) as a cofactor. Mn(2+) serves as cofactor.

The enzyme catalyses hydrogencarbonate + L-glutamine + 2 ATP + H2O = carbamoyl phosphate + L-glutamate + 2 ADP + phosphate + 2 H(+). The catalysed reaction is hydrogencarbonate + NH4(+) + 2 ATP = carbamoyl phosphate + 2 ADP + phosphate + 2 H(+). It functions in the pathway amino-acid biosynthesis; L-arginine biosynthesis; carbamoyl phosphate from bicarbonate: step 1/1. The protein operates within pyrimidine metabolism; UMP biosynthesis via de novo pathway; (S)-dihydroorotate from bicarbonate: step 1/3. Functionally, large subunit of the glutamine-dependent carbamoyl phosphate synthetase (CPSase). CPSase catalyzes the formation of carbamoyl phosphate from the ammonia moiety of glutamine, carbonate, and phosphate donated by ATP, constituting the first step of 2 biosynthetic pathways, one leading to arginine and/or urea and the other to pyrimidine nucleotides. The large subunit (synthetase) binds the substrates ammonia (free or transferred from glutamine from the small subunit), hydrogencarbonate and ATP and carries out an ATP-coupled ligase reaction, activating hydrogencarbonate by forming carboxy phosphate which reacts with ammonia to form carbamoyl phosphate. The chain is Carbamoyl phosphate synthase large chain from Lactobacillus helveticus (strain DPC 4571).